Consider the following 157-residue polypeptide: Large ribosomal subunit protein uL15 (157 aa).

Positions 1–40 (MKLHELSDNPGATKKRMRIGRGPGSGKGKMGGRGIKGQKS) are disordered. Over residues 21–35 (RGPGSGKGKMGGRGI) the composition is skewed to gly residues.

The protein belongs to the universal ribosomal protein uL15 family. As to quaternary structure, part of the 50S ribosomal subunit.

Its function is as follows. Binds to the 23S rRNA. This is Large ribosomal subunit protein uL15 from Ruegeria pomeroyi (strain ATCC 700808 / DSM 15171 / DSS-3) (Silicibacter pomeroyi).